Here is a 91-residue protein sequence, read N- to C-terminus: Small ribosomal subunit protein bS16 (91 aa).

Belongs to the bacterial ribosomal protein bS16 family.

The polypeptide is Small ribosomal subunit protein bS16 (Levilactobacillus brevis (strain ATCC 367 / BCRC 12310 / CIP 105137 / JCM 1170 / LMG 11437 / NCIMB 947 / NCTC 947) (Lactobacillus brevis)).